We begin with the raw amino-acid sequence, 379 residues long: Protein FAM53B (379 aa).

Disordered stretches follow at residues 206-257 and 302-348; these read CPAE…HKQR and AQND…AGKE. Positions 212–236 are enriched in polar residues; sequence SPESTPELQRRSGQSGLARSRSQPC. Positions 239–249 are enriched in basic residues; the sequence is NHQKIGVKRRR. The Nuclear localization signal signature appears at 246-249; the sequence is KRRR. Over residues 326-342 the composition is skewed to polar residues; the sequence is QSDSSSADALIHQSESS.

The protein belongs to the FAM53 family. As to quaternary structure, interacts with ctnnb1. In terms of tissue distribution, mainly expressed in proliferating tissues.

Its subcellular location is the nucleus. In terms of biological role, acts as a regulator of Wnt signaling pathway by regulating beta-catenin (ctnnb1) nuclear localization. Required for appendage regeneration by regulating cell proliferation. This Danio rerio (Zebrafish) protein is Protein FAM53B.